A 418-amino-acid polypeptide reads, in one-letter code: ADP-ribose glycohydrolase MACROD2 (418 aa).

The Macro domain maps to 57-238 (PEEIQVKNSL…IYKRKLNEFF (182 aa)). Residues 75 to 77 (GDI), 88 to 90 (AAN), 95 to 100 (GGGGVD), 183 to 189 (ISTGIYG), and Phe222 each bind substrate. A disordered region spans residues 238-418 (FPKDGGDDEE…KDTNDDANEA (181 aa)). Residues 250–262 (KGDSDEMKEDTEG) are compositionally biased toward basic and acidic residues. The segment covering 295 to 318 (TGNTQDMTAMSLETNEGNDVSSPA) has biased composition (polar residues). A compositionally biased stretch (basic and acidic residues) spans 321 to 360 (PLKEGEELSEAKITGEKISVEPKTPEPEDAKMTVEEKSQE). Residues 377-389 (ETEDLDGDSEEPS) show a composition bias toward acidic residues.

It belongs to the MacroD-type family. MacroD1/2-like subfamily.

The protein localises to the nucleus. It carries out the reaction 2''-O-acetyl-ADP-D-ribose + H2O = ADP-D-ribose + acetate + H(+). It catalyses the reaction 4-O-(ADP-D-ribosyl)-L-aspartyl-[protein] + H2O = L-aspartyl-[protein] + ADP-D-ribose + H(+). The catalysed reaction is 5-O-(ADP-D-ribosyl)-L-glutamyl-[protein] + H2O = L-glutamyl-[protein] + ADP-D-ribose + H(+). The enzyme catalyses alpha-NAD(+) + H2O = ADP-D-ribose + nicotinamide + H(+). Its activity is regulated as follows. Subject to product inhibition by ADP-ribose. In terms of biological role, removes ADP-ribose from aspartate and glutamate residues in proteins bearing a single ADP-ribose moiety. Inactive towards proteins bearing poly-ADP-ribose. Deacetylates O-acetyl-ADP ribose, a signaling molecule generated by the deacetylation of acetylated lysine residues in histones and other proteins. In Xenopus laevis (African clawed frog), this protein is ADP-ribose glycohydrolase MACROD2.